A 404-amino-acid polypeptide reads, in one-letter code: MEGATFSKYSWIDFVFSVIGACTFLVDWGSDVWLAAEFYRRGDVTWFWVLVGLMALSSFVVQTFSWFWFQYDRELPGFRAQTEAAAVLLGDRAKLSCAVHVLQLGFLCRHISAIRQGFRVWWRKEKGSEYAIYQTHDLSMLRLIETFCESAPQLTLMIYVMLHTHKARAVQFVSIAASTTSIAWMVVDYHRSLRSFLPDKAKQGWGSSLIYFLWNLLLIAPRVAALALCASVLSGYMAAHFLMLWSAFALWAWRQGTHFMDSVAGEWLYRATVGLIWYFSWFNVKDGQTRSRSAIYHSFISTDGAILLATWWCHRDPVQTQSYALALLIALPLFHFLGLLFKALYYCCFHPKLWRPPARDPGLPNDLPDAQVSMRDFPIQDGGLSPKLLNKRMAGQVARFYSDE.

8 consecutive transmembrane segments (helical) span residues Phe-14 to Leu-34, Val-44 to Phe-64, Ala-169 to Tyr-189, Leu-209 to Cys-229, Val-232 to Ala-252, Ser-262 to Phe-282, Ser-293 to Cys-313, and Ala-324 to Leu-344.

This sequence belongs to the XK family.

It is found in the cell membrane. The catalysed reaction is a 1,2-diacyl-sn-glycero-3-phospho-L-serine(in) = a 1,2-diacyl-sn-glycero-3-phospho-L-serine(out). In terms of biological role, phospholipid scramblase that promotes phosphatidylserine exposure on apoptotic cell surface, possibly by mediating phospholipid scrambling. Phosphatidylserine is a specific marker only present at the surface of apoptotic cells and acts as a specific signal for engulfment. The chain is XK-related protein 8 from Gasterosteus aculeatus (Three-spined stickleback).